The primary structure comprises 640 residues: F-box only protein 43 (640 aa).

T176 carries the phosphothreonine modification. S275 bears the Phosphoserine mark. Residues 328 to 354 (LQEQGQSEDEMQTVHPNSDSGVLESLQ) are disordered. The 58-residue stretch at 423–480 (MGIEQLDILTELQYRNLKHILAMVLESLTSESLYSAWNVSRNWREIVAQDKKANRRRK) folds into the F-box domain. The ZBR-type zinc-finger motif lies at 568–616 (ALKPCPRCQSPAKYQPHKKRGLCSRLACGFDFCVLCLCAYHGSEDCRRG). Zn(2+) is bound by residues C572, C575, C590, C595, C600, C603, H608, and C613. Residues 615–640 (RGSAKARGSKDVLPGSAQSKRNLKRL) are disordered.

As to quaternary structure, part of a SCF (SKP1-cullin-F-box) protein ligase complex. Interaction with SKP1 does not occur. Interacts with ANAPC2; the interaction is direct, ANAPC4, CDC16, CDC23; the interaction is direct, ANAPC10; the interaction is direct and CDC26, during spermatogenesis. Interacts with CDC20. Phosphorylated on Thr-176 and Ser-275 in response to calcium, which is a prerequisite for ubiquitination and proteasomal degradation. Post-translationally, ubiquitinated in response to calcium, which promotes proteasomal degradation. In terms of tissue distribution, present in testis and ovary (at protein level). Expression is high in immature oocytes, and diminishes after oocyte activation. Expressed post-meiotically in spermatids and sperm.

The protein operates within protein modification; protein ubiquitination. In terms of biological role, required to establish and maintain the arrest of oocytes at the second meiotic metaphase until fertilization. Acts by inhibiting the anaphase-promoting complex/cyclosome (APC/C) ubiquitin ligase. Probably recognizes and binds to some phosphorylated proteins and promotes their ubiquitination and degradation. Plays a vital role in modulating the ubiquitilation of CCNB1 and CDK1 during gametogenesis. This is F-box only protein 43 (Fbxo43) from Mus musculus (Mouse).